Consider the following 356-residue polypeptide: Tyrosine recombinase XerS (356 aa).

A Core-binding (CB) domain is found at 16–121 (IMPWYVLDYY…ALSSLYKYLT (106 aa)). Residues 169–354 (AFLDYVDKEY…VNDEQKNALD (186 aa)) form the Tyr recombinase domain. Catalysis depends on residues Arg210, Lys234, His306, Arg309, and His332. Tyr341 serves as the catalytic O-(3'-phospho-DNA)-tyrosine intermediate.

The protein belongs to the 'phage' integrase family. XerS subfamily.

It localises to the cytoplasm. With respect to regulation, ftsK is required for recombination. Site-specific tyrosine recombinase, which acts by catalyzing the cutting and rejoining of the recombining DNA molecules. Essential to convert dimers of the bacterial chromosome into monomers to permit their segregation at cell division. This Streptococcus pyogenes serotype M6 (strain ATCC BAA-946 / MGAS10394) protein is Tyrosine recombinase XerS.